The following is a 360-amino-acid chain: Aminomethyltransferase (360 aa).

The protein belongs to the GcvT family. The glycine cleavage system is composed of four proteins: P, T, L and H.

It carries out the reaction N(6)-[(R)-S(8)-aminomethyldihydrolipoyl]-L-lysyl-[protein] + (6S)-5,6,7,8-tetrahydrofolate = N(6)-[(R)-dihydrolipoyl]-L-lysyl-[protein] + (6R)-5,10-methylene-5,6,7,8-tetrahydrofolate + NH4(+). Its function is as follows. The glycine cleavage system catalyzes the degradation of glycine. The polypeptide is Aminomethyltransferase (Legionella pneumophila subsp. pneumophila (strain Philadelphia 1 / ATCC 33152 / DSM 7513)).